We begin with the raw amino-acid sequence, 287 residues long: MINLRQQMPHYLRLMRFDKPVGIFLLLWPTLWAVWIAAKGAPSFKIAVIFIAGSVVMRAAGCIVNDFADRHLDKHVQRTQMRPLASGSVSVTEAMLLFAVLSLIAFTLVLLLNRLTVELAVIGILLALVYPFLKRFTHLPQLWLGVAFSWSIPMAFAATVGHVPAVAWLLFFAAVLWPIVYDTQYAMIDREDDVKVGIKSTAILFGRYDRLMIGLLQGSVLLTFGLLGWYLRFNYWFYLGLLVALGLMCYQQFLIRHRKPPDCFAAFRNNNWVGFFIFLGILLTHRN.

9 helical membrane-spanning segments follow: residues 21–41 (VGIFLLLWPTLWAVWIAAKGA), 44–64 (FKIAVIFIAGSVVMRAAGCIV), 91–111 (VTEAMLLFAVLSLIAFTLVLL), 112–132 (LNRLTVELAVIGILLALVYPF), 139–159 (LPQLWLGVAFSWSIPMAFAAT), 160–180 (VGHVPAVAWLLFFAAVLWPIV), 211–231 (LMIGLLQGSVLLTFGLLGWYL), 235–255 (YWFYLGLLVALGLMCYQQFLI), and 263–283 (CFAAFRNNNWVGFFIFLGILL).

This sequence belongs to the UbiA prenyltransferase family. Mg(2+) serves as cofactor.

It localises to the cell inner membrane. It catalyses the reaction all-trans-octaprenyl diphosphate + 4-hydroxybenzoate = 4-hydroxy-3-(all-trans-octaprenyl)benzoate + diphosphate. Its pathway is cofactor biosynthesis; ubiquinone biosynthesis. Functionally, catalyzes the prenylation of para-hydroxybenzoate (PHB) with an all-trans polyprenyl group. Mediates the second step in the final reaction sequence of ubiquinone-8 (UQ-8) biosynthesis, which is the condensation of the polyisoprenoid side chain with PHB, generating the first membrane-bound Q intermediate 3-octaprenyl-4-hydroxybenzoate. The protein is 4-hydroxybenzoate octaprenyltransferase of Coxiella burnetii (strain RSA 331 / Henzerling II).